Consider the following 122-residue polypeptide: Large ribosomal subunit protein uL14 (122 aa).

Belongs to the universal ribosomal protein uL14 family. In terms of assembly, part of the 50S ribosomal subunit. Forms a cluster with proteins L3 and L19. In the 70S ribosome, L14 and L19 interact and together make contacts with the 16S rRNA in bridges B5 and B8.

Its function is as follows. Binds to 23S rRNA. Forms part of two intersubunit bridges in the 70S ribosome. The protein is Large ribosomal subunit protein uL14 of Mesorhizobium japonicum (strain LMG 29417 / CECT 9101 / MAFF 303099) (Mesorhizobium loti (strain MAFF 303099)).